Reading from the N-terminus, the 121-residue chain is UPF0102 protein AAur_2443 (121 aa).

The protein belongs to the UPF0102 family.

The chain is UPF0102 protein AAur_2443 from Paenarthrobacter aurescens (strain TC1).